We begin with the raw amino-acid sequence, 123 residues long: Potassium voltage-gated channel subfamily E member 2 (123 aa).

2 N-linked (GlcNAc...) asparagine glycosylation sites follow: asparagine 6 and asparagine 29. A helical transmembrane segment spans residues 49–69 (VILYLMVMIGMFSFIIVAILV). Topologically, residues 70–123 (STVKSKRREHSNDPYHQYIVEDWQEKYKSQILNLEESKATIHENIGAAGFKMSP) are cytoplasmic.

Belongs to the potassium channel KCNE family. As to quaternary structure, interacts with KCNB1. Associates with KCNH2/ERG1. May associate with KCNQ2 and KCNQ3. Associates with HCN1 and probably HCN2. Heteromultimer with KCNC2. Interacts with KCNC2. Interacts with KCNQ1; forms a heterooligomer complex that targets to the membrane raft and leading to currents with an apparently instantaneous activation, a rapid deactivation process and a linear current-voltage relationship and decreases the amplitude of the outward current. As to expression, highly expressed in brain, heart, skeletal muscle, pancreas, placenta, kidney, colon and thymus. A small but significant expression is found in liver, ovary, testis, prostate, small intestine and leukocytes. Very low expression, nearly undetectable, in lung and spleen.

The protein localises to the cell membrane. The protein resides in the apical cell membrane. Functionally, ancillary protein that functions as a regulatory subunit of the voltage-gated potassium (Kv) channel complex composed of pore-forming and potassium-conducting alpha subunits and of regulatory beta subunits. KCNE2 beta subunit modulates the gating kinetics and enhances stability of the channel complex. Alters the gating of the delayed rectifier Kv channel containing KCNB1 alpha subunit. Associates with KCNH2/HERG alpha subunit Kv channel to form the rapidly activating component of the delayed rectifying potassium current (IKr) in heart. May associate with KCNQ2 and/or KCNQ3 alpha subunits to modulate the native M-type current. May associate with HCN1 and HCN2 channel subunits to increase potassium current. Forms a heterooligomer complex with KCNQ1/KVLQT1 alpha subunits which leads to currents with an apparently instantaneous activation, a rapid deactivation process and a linear current-voltage relationship and decreases the amplitude of the outward current. KCNQ1-KCNE2 channel associates with Na(+)-coupled myo-inositol symporter in the apical membrane of choroid plexus epithelium and regulates the myo-inositol gradient between blood and cerebrospinal fluid with an impact on neuron excitability. The sequence is that of Potassium voltage-gated channel subfamily E member 2 from Homo sapiens (Human).